The primary structure comprises 101 residues: Citrate lyase acyl carrier protein (101 aa).

Ser14 carries the O-(phosphoribosyl dephospho-coenzyme A)serine modification.

The protein belongs to the CitD family. In terms of assembly, oligomer with a subunit composition of (alpha,beta,gamma)6.

The protein localises to the cytoplasm. Covalent carrier of the coenzyme of citrate lyase. The sequence is that of Citrate lyase acyl carrier protein from Lacticaseibacillus casei (strain BL23) (Lactobacillus casei).